A 331-amino-acid chain; its full sequence is Glucokinase (331 aa).

Position 16 to 21 (16 to 21 (GDIGGT)) interacts with ATP.

Belongs to the bacterial glucokinase family.

The protein resides in the cytoplasm. The catalysed reaction is D-glucose + ATP = D-glucose 6-phosphate + ADP + H(+). The chain is Glucokinase from Pseudomonas aeruginosa (strain UCBPP-PA14).